A 198-amino-acid chain; its full sequence is ATP-dependent Clp protease proteolytic subunit (198 aa).

Ser-101 (nucleophile) is an active-site residue. His-126 is a catalytic residue.

Belongs to the peptidase S14 family. As to quaternary structure, component of the chloroplastic Clp protease core complex.

It is found in the plastid. The protein resides in the chloroplast stroma. It carries out the reaction Hydrolysis of proteins to small peptides in the presence of ATP and magnesium. alpha-casein is the usual test substrate. In the absence of ATP, only oligopeptides shorter than five residues are hydrolyzed (such as succinyl-Leu-Tyr-|-NHMec, and Leu-Tyr-Leu-|-Tyr-Trp, in which cleavage of the -Tyr-|-Leu- and -Tyr-|-Trp bonds also occurs).. In terms of biological role, cleaves peptides in various proteins in a process that requires ATP hydrolysis. Has a chymotrypsin-like activity. Plays a major role in the degradation of misfolded proteins. This is ATP-dependent Clp protease proteolytic subunit from Solanum bulbocastanum (Wild potato).